The chain runs to 72 residues: Conotoxin LiC53 (72 aa).

Positions 1 to 23 are cleaved as a signal peptide; the sequence is MEKLTSLLLVAALLMLTQTLIQG. Positions 24–41 are excised as a propeptide; the sequence is GGEDRPNKKFLQKIKSTA. Cystine bridges form between cysteine 45–cysteine 59, cysteine 52–cysteine 63, and cysteine 58–cysteine 68.

Belongs to the conotoxin O2 superfamily. As to expression, expressed by the venom duct.

The protein resides in the secreted. The chain is Conotoxin LiC53 from Conus lividus (Livid cone).